The sequence spans 140 residues: Putative pre-16S rRNA nuclease (140 aa).

It belongs to the YqgF nuclease family.

Its subcellular location is the cytoplasm. In terms of biological role, could be a nuclease involved in processing of the 5'-end of pre-16S rRNA. The protein is Putative pre-16S rRNA nuclease of Parabacteroides distasonis (strain ATCC 8503 / DSM 20701 / CIP 104284 / JCM 5825 / NCTC 11152).